A 188-amino-acid polypeptide reads, in one-letter code: MTSPWSAFPVQIPQPSIRGLSQITKSLFISNGVAANNKLLLSSNQITTVINVSVEVANTFYEDIQYVQVPVVDAPVARLSNFFDSVADRIHSVEMQKGRTLLHCAAGVSRSAALCLAYLMKYHAMSLVDAHTWTKSCRPIIRPNSGFWEQLIHYELQLFGKNTMQMMDSPMGRIPDIYEKETRLMIPL.

Positions 19 to 160 constitute a Tyrosine-protein phosphatase domain; sequence GLSQITKSLF…LIHYELQLFG (142 aa). The sufficient for mitochondrial localization stretch occupies residues 95-141; sequence MQKGRTLLHCAAGVSRSAALCLAYLMKYHAMSLVDAHTWTKSCRPII. The Phosphocysteine intermediate role is filled by Cys104.

The protein belongs to the protein-tyrosine phosphatase family. Non-receptor class dual specificity subfamily.

The protein resides in the cytoplasm. Its subcellular location is the nucleus. The protein localises to the mitochondrion inner membrane. It catalyses the reaction O-phospho-L-tyrosyl-[protein] + H2O = L-tyrosyl-[protein] + phosphate. The catalysed reaction is O-phospho-L-seryl-[protein] + H2O = L-seryl-[protein] + phosphate. It carries out the reaction O-phospho-L-threonyl-[protein] + H2O = L-threonyl-[protein] + phosphate. Its function is as follows. Can dephosphorylate single and diphosphorylated synthetic MAPK peptides, with preference for the phosphotyrosine and diphosphorylated forms over phosphothreonine. In vitro, dephosphorylates p-nitrophenyl phosphate (pNPP). The sequence is that of Dual specificity protein phosphatase 18 (Dusp18) from Mus musculus (Mouse).